Here is a 481-residue protein sequence, read N- to C-terminus: Innexin inx6 (481 aa).

At 1–21 (MYAAVKPLSNYLRLKTVRIYD) the chain is on the cytoplasmic side. A helical transmembrane segment spans residues 22–42 (PIFTLHSKCTIVILLTCTFLL). Residues 43–144 (SAKQYFGEPI…VTKRMYLRYY (102 aa)) lie on the Extracellular side of the membrane. Residues 145–165 (QWVFMILLFQSLLFYFPSFLW) form a helical membrane-spanning segment. Residues 166-220 (KVWEGQRMEQLCCEVGDALIVEATYRTRLQMLTRYFRAQFAPIHWCYSIKYAFCE) are Cytoplasmic-facing. Residues 221 to 241 (LLNVFISILNFWLMDVVFNGF) form a helical membrane-spanning segment. Residues 242–302 (WYKYIHALAA…VLPLNILNEK (61 aa)) lie on the Extracellular side of the membrane. Residues 303–323 (IFAVLYVWFLFIALLAIMNIL) form a helical membrane-spanning segment. Residues 324–481 (YRLLVICCPE…MDRFFHESHA (158 aa)) are Cytoplasmic-facing.

The protein belongs to the pannexin family. Uniform expression in the imaginal wing disk. Expressed in an outer layer of the pupal developing CNS. Also expressed in pupal retina: cone cells and primary pigment cells.

The protein resides in the cell membrane. Its subcellular location is the cell junction. It is found in the gap junction. Functionally, structural components of the gap junctions. The chain is Innexin inx6 (Inx6) from Drosophila melanogaster (Fruit fly).